Reading from the N-terminus, the 59-residue chain is ATP synthase protein 8 (59 aa).

Residues 7–23 (LSPPFLYFELIGHFQVE) form a helical membrane-spanning segment.

Belongs to the ATPase protein 8 family. As to quaternary structure, F-type ATPases have 2 components, CF(1) - the catalytic core - and CF(0) - the membrane proton channel.

Its subcellular location is the mitochondrion membrane. Functionally, mitochondrial membrane ATP synthase (F(1)F(0) ATP synthase or Complex V) produces ATP from ADP in the presence of a proton gradient across the membrane which is generated by electron transport complexes of the respiratory chain. F-type ATPases consist of two structural domains, F(1) - containing the extramembraneous catalytic core and F(0) - containing the membrane proton channel, linked together by a central stalk and a peripheral stalk. During catalysis, ATP synthesis in the catalytic domain of F(1) is coupled via a rotary mechanism of the central stalk subunits to proton translocation. Part of the complex F(0) domain. Minor subunit located with subunit a in the membrane. The chain is ATP synthase protein 8 (MT-ATP8) from Oenothera berteroana (Bertero's evening primrose).